A 208-amino-acid polypeptide reads, in one-letter code: FMN-dependent NADH:quinone oxidoreductase 4 (208 aa).

The protein belongs to the azoreductase type 1 family. Homodimer. FMN serves as cofactor.

The enzyme catalyses 2 a quinone + NADH + H(+) = 2 a 1,4-benzosemiquinone + NAD(+). The catalysed reaction is N,N-dimethyl-1,4-phenylenediamine + anthranilate + 2 NAD(+) = 2-(4-dimethylaminophenyl)diazenylbenzoate + 2 NADH + 2 H(+). Functionally, quinone reductase that provides resistance to thiol-specific stress caused by electrophilic quinones. Its function is as follows. Also exhibits azoreductase activity. Catalyzes the reductive cleavage of the azo bond in aromatic azo compounds to the corresponding amines. In Bacillus anthracis, this protein is FMN-dependent NADH:quinone oxidoreductase 4.